A 241-amino-acid chain; its full sequence is Lactate utilization protein C (241 aa).

It belongs to the LutC/YkgG family.

Functionally, is involved in L-lactate degradation and allows cells to grow with lactate as the sole carbon source. This is Lactate utilization protein C from Geobacillus sp. (strain WCH70).